Reading from the N-terminus, the 74-residue chain is Kappa-scoloptoxin(07)-Ssm2f (74 aa).

Residues 1–19 (MLVFYAILFVTVFSNTVMG) form the signal peptide. Positions 20–41 (ATIDKPIPKPIFREAIEEMEVN) are excised as a propeptide.

The protein belongs to the scoloptoxin-07 family. Post-translationally, contains 3 disulfide bonds. Expressed by the venom gland.

Its subcellular location is the secreted. In terms of biological role, inhibits voltage-gated potassium channels. This is Kappa-scoloptoxin(07)-Ssm2f from Scolopendra mutilans (Chinese red-headed centipede).